Consider the following 23-residue polypeptide: Melittin-related peptide AK-23-1 (23 aa).

Lysine 23 carries the post-translational modification Lysine amide.

In terms of tissue distribution, expressed by the skin glands.

It is found in the secreted. This Rana arvalis (Moor frog) protein is Melittin-related peptide AK-23-1.